The primary structure comprises 443 residues: Tol-Pal system protein TolB (443 aa).

Positions 1–24 are cleaved as a signal peptide; it reads MSFQIRVFTAILAVLSLFTAPVLA. Residues 424–443 form a disordered region; sequence LRPVRTPEGGSDPSWSPLQR.

It belongs to the TolB family. As to quaternary structure, the Tol-Pal system is composed of five core proteins: the inner membrane proteins TolA, TolQ and TolR, the periplasmic protein TolB and the outer membrane protein Pal. They form a network linking the inner and outer membranes and the peptidoglycan layer.

The protein resides in the periplasm. In terms of biological role, part of the Tol-Pal system, which plays a role in outer membrane invagination during cell division and is important for maintaining outer membrane integrity. This Roseobacter denitrificans (strain ATCC 33942 / OCh 114) (Erythrobacter sp. (strain OCh 114)) protein is Tol-Pal system protein TolB.